A 126-amino-acid chain; its full sequence is Large ribosomal subunit protein bL12 (126 aa).

Belongs to the bacterial ribosomal protein bL12 family. As to quaternary structure, homodimer. Part of the ribosomal stalk of the 50S ribosomal subunit. Forms a multimeric L10(L12)X complex, where L10 forms an elongated spine to which 2 to 4 L12 dimers bind in a sequential fashion. Binds GTP-bound translation factors.

Its function is as follows. Forms part of the ribosomal stalk which helps the ribosome interact with GTP-bound translation factors. Is thus essential for accurate translation. This chain is Large ribosomal subunit protein bL12, found in Chlorobium phaeobacteroides (strain BS1).